We begin with the raw amino-acid sequence, 143 residues long: MGAIVLVALMALVASSSAFSDIEHNIMKLEGENIISSSSTPNDDQSSFSDGTSDMVESLFLNSGNRNLVLMMLSGRPQPNGRCIGDAQPCGFLVSDKGCCDPNYCSEYSKGKCICVPKGQPCGLLHFCCLDLTCDGYFNGTCK.

The signal sequence occupies residues 1–18 (MGAIVLVALMALVASSSA). Residues 19 to 80 (FSDIEHNIMK…MMLSGRPQPN (62 aa)) constitute a propeptide that is removed on maturation. 6 disulfide bridges follow: C83-C100, C90-C105, C99-C113, C115-C129, C122-C134, and C128-C142.

Belongs to the urticatoxin-2 family. As to expression, expressed in trichomes, that are stiff epidermal hairs located on the surface of petioles and leaves.

The protein resides in the secreted. Plant defense neurotoxin that causes pain and systemic symptoms in mammals via modulation of voltage-gated sodium channels (Nav). Potent modulator of human Nav1.5/SCN5A (EC(50)=55 nM), Nav1.6/SCN8A (EC(50)=0.86 nM), and Nav1.7/SCN9A (EC(50)=208 nM), where it shifts the activation threshold to more negative potentials and delays fast inactivation. Also shifts the voltage-dependence of steady-state fast inactivation of Nav1.6/SCN8A, but not that of Nav1.5/SCN5A or Nav1.7/SCN9A. On Nav1.7/SCN9A, principally acts by binding to extracellular loops of domain IV (Nav site 3). Does not affect current response of the tetrodotoxin (TTX)-resistant Nav1.8/SCN10A sodium channel. In vivo, intraplantar injection into mice causes numerous dose-dependent, immediate, and long-lasting spontaneous pain behaviors, while no swelling is observed in the injected paw. At the highest doses tested, systemic symptoms including hypokinesia and hypersalivation are observed. This chain is Beta/delta-urticatoxin-Uf2a, found in Urtica ferox (Tree nettle).